A 423-amino-acid chain; its full sequence is Large ribosomal subunit protein mL37 (423 aa).

Residues 1 to 29 (MALASGPARRVLARPWGLGLEGCGVPRRG) constitute a mitochondrion transit peptide.

Belongs to the mitochondrion-specific ribosomal protein mL37 family. As to quaternary structure, component of the mitochondrial ribosome large subunit (39S) which comprises a 16S rRNA and about 50 distinct proteins.

It localises to the mitochondrion. The protein is Large ribosomal subunit protein mL37 (MRPL37) of Bos taurus (Bovine).